Reading from the N-terminus, the 359-residue chain is Phospho-N-acetylmuramoyl-pentapeptide-transferase (359 aa).

A run of 10 helical transmembrane segments spans residues 3–23, 55–75, 84–104, 120–140, 156–176, 187–207, 231–251, 255–275, 280–300, and 334–354; these read QILIAVGLALAVSILLTPVLI, VAILAGIWVSYLGTHLVGLAL, GLLVLGLATALGIVGFIDDLI, TVGILAAALLFGVLALQFGNA, IATVTLAPMIFVLFCVVLVSA, LDGLAAGAMAMVCAAYVLITF, LALVAAAAAGACIGFLWWNAA, IFMGDTGSLALGGIIAGLSVT, ILAVVLGALFVAEVTSVVVQI, and FWLLTAIACGLGVALFYGEWL.

This sequence belongs to the glycosyltransferase 4 family. MraY subfamily. The cofactor is Mg(2+).

The protein resides in the cell membrane. The enzyme catalyses UDP-N-acetyl-alpha-D-muramoyl-L-alanyl-gamma-D-glutamyl-meso-2,6-diaminopimeloyl-D-alanyl-D-alanine + di-trans,octa-cis-undecaprenyl phosphate = di-trans,octa-cis-undecaprenyl diphospho-N-acetyl-alpha-D-muramoyl-L-alanyl-D-glutamyl-meso-2,6-diaminopimeloyl-D-alanyl-D-alanine + UMP. It participates in cell wall biogenesis; peptidoglycan biosynthesis. Its function is as follows. Catalyzes the initial step of the lipid cycle reactions in the biosynthesis of the cell wall peptidoglycan: transfers peptidoglycan precursor phospho-MurNAc-pentapeptide from UDP-MurNAc-pentapeptide onto the lipid carrier undecaprenyl phosphate, yielding undecaprenyl-pyrophosphoryl-MurNAc-pentapeptide, known as lipid I. The chain is Phospho-N-acetylmuramoyl-pentapeptide-transferase from Mycobacterium sp. (strain MCS).